Here is a 417-residue protein sequence, read N- to C-terminus: RH-like protein ID (417 aa).

Transmembrane regions (helical) follow at residues C12–T32, L44–F64, V77–F97, I125–V145, I172–A192, T203–F223, V238–L258, I265–C285, L287–G307, N331–T351, and M358–L378.

The protein belongs to the ammonium transporter (TC 2.A.49) family. Rh subfamily.

The protein localises to the membrane. Functionally, may be part of an oligomeric complex which is likely to have a transport or channel function in the erythrocyte membrane. The protein is RH-like protein ID of Gorilla gorilla gorilla (Western lowland gorilla).